A 653-amino-acid chain; its full sequence is Zinc finger CCCH domain-containing protein 54 (653 aa).

Residues 242–261 form a disordered region; it reads NGGGGGGGSPARARRSNGLS. The C3H1-type zinc-finger motif lies at 260 to 287; sequence LSTRRPCHYFSKGICKNGQNCHYSHHQV. One can recognise an HTH OST-type domain in the interval 313–396; it reads SLETLEMEIT…GQHSVVLAED (84 aa). Residues 422–497 enclose the RRM domain; that stretch reads HQIYLTFPAE…SRVLVKPYRE (76 aa). The stretch at 537–565 forms a coiled coil; that stretch reads RLMRKQLAEKREMLLEMERRRATVRRLES. Positions 598–623 are disordered; it reads PSLASPDPLEIVSNSQAPPTQAGNIY. Residues 609-620 show a composition bias toward polar residues; that stretch reads VSNSQAPPTQAG.

The polypeptide is Zinc finger CCCH domain-containing protein 54 (Oryza sativa subsp. japonica (Rice)).